Here is a 274-residue protein sequence, read N- to C-terminus: NADPH-dependent 7-cyano-7-deazaguanine reductase (274 aa).

A substrate-binding site is contributed by 80-82 (VES). 82-83 (SK) contributes to the NADPH binding site. Catalysis depends on cysteine 181, which acts as the Thioimide intermediate. The Proton donor role is filled by aspartate 188. A substrate-binding site is contributed by 220–221 (HE). 249–250 (RG) serves as a coordination point for NADPH.

This sequence belongs to the GTP cyclohydrolase I family. QueF type 2 subfamily. As to quaternary structure, homodimer.

Its subcellular location is the cytoplasm. The enzyme catalyses 7-aminomethyl-7-carbaguanine + 2 NADP(+) = 7-cyano-7-deazaguanine + 2 NADPH + 3 H(+). It participates in tRNA modification; tRNA-queuosine biosynthesis. In terms of biological role, catalyzes the NADPH-dependent reduction of 7-cyano-7-deazaguanine (preQ0) to 7-aminomethyl-7-deazaguanine (preQ1). This chain is NADPH-dependent 7-cyano-7-deazaguanine reductase, found in Burkholderia ambifaria (strain MC40-6).